The following is a 148-amino-acid chain: Large ribosomal subunit protein uL15 (148 aa).

The tract at residues 1 to 47 is disordered; the sequence is MAFSLENLRPAPGSRPKSKRVGRGSSSGKGKTSSRGHKGQGRGTGKV.

This sequence belongs to the universal ribosomal protein uL15 family. In terms of assembly, part of the 50S ribosomal subunit.

In terms of biological role, binds to the 23S rRNA. The protein is Large ribosomal subunit protein uL15 of Kosmotoga olearia (strain ATCC BAA-1733 / DSM 21960 / TBF 19.5.1).